A 590-amino-acid polypeptide reads, in one-letter code: Aspartate--tRNA(Asp/Asn) ligase (590 aa).

Position 175 (E175) interacts with L-aspartate. The tract at residues 199 to 202 (QQYK) is aspartate. Residues R221 and H450 each coordinate L-aspartate. Residue 221 to 223 (RDE) participates in ATP binding. E484 contacts ATP. R491 contacts L-aspartate. Residue 536-539 (GVDR) participates in ATP binding.

The protein belongs to the class-II aminoacyl-tRNA synthetase family. Type 1 subfamily. In terms of assembly, homodimer.

The protein localises to the cytoplasm. It carries out the reaction tRNA(Asx) + L-aspartate + ATP = L-aspartyl-tRNA(Asx) + AMP + diphosphate. Its function is as follows. Aspartyl-tRNA synthetase with relaxed tRNA specificity since it is able to aspartylate not only its cognate tRNA(Asp) but also tRNA(Asn). Reaction proceeds in two steps: L-aspartate is first activated by ATP to form Asp-AMP and then transferred to the acceptor end of tRNA(Asp/Asn). The sequence is that of Aspartate--tRNA(Asp/Asn) ligase from Bradyrhizobium sp. (strain BTAi1 / ATCC BAA-1182).